A 347-amino-acid chain; its full sequence is uncharacterized protein (347 aa).

Coiled-coil stretches lie at residues 148 to 201 (DQQS…EKDG) and 261 to 298 (LENL…DTFS). The segment at 151–203 (SISNLRKEEKEKQKENENENENENENENENEKENQELDKKVNQTNDNEKDGDE) is disordered. Residues 155 to 167 (LRKEEKEKQKENE) show a composition bias toward basic and acidic residues. Residues 168–178 (NENENENENEN) show a composition bias toward acidic residues. Basic and acidic residues predominate over residues 179-191 (ENEKENQELDKKV).

This is an uncharacterized protein from Dictyostelium discoideum (Social amoeba).